The following is a 313-amino-acid chain: GDP-D-glycero-alpha-D-manno-heptose dehydrogenase (313 aa).

Residues Tyr13–Ile14, Asp33–Gln39, Phe37, Asp57–Ala58, Leu77, and Tyr144–Lys148 each bind NADH. Thr168 provides a ligand contact to GDP. NADH-binding positions include Val169 and Arg175–Arg177. GDP-binding positions include Asp179–Asp184, Val196–Phe198, Arg204, Lys242, and Arg270. Asn311 serves as a coordination point for NADH.

As to quaternary structure, homotetramer. NAD(+) serves as cofactor.

The enzyme catalyses GDP-D-glycero-alpha-D-manno-heptose + 2-oxoglutarate = GDP-D-glycero-4-keto-alpha-D-lyxo-heptose + (S)-2-hydroxyglutarate. Its pathway is capsule biogenesis; capsule polysaccharide biosynthesis. Its function is as follows. NAD-dependent dehydrogenase involved in the biosynthesis of heptose moieties with a hydroxyl group at C6 found on the capsular polysaccharide (CPS) of C.jejuni. Catalyzes the initial oxidation of C4 of the GDP-D-glycero-alpha-D-manno-heptose to form GDP-D-glycero-4-keto-alpha-D-lyxo-heptose in the presence of alpha-ketoglutarate required to recycle the NADH nucleotide. The polypeptide is GDP-D-glycero-alpha-D-manno-heptose dehydrogenase (Campylobacter jejuni subsp. jejuni serotype O:2 (strain ATCC 700819 / NCTC 11168)).